A 344-amino-acid chain; its full sequence is Phosphate acyltransferase (344 aa).

This sequence belongs to the PlsX family. As to quaternary structure, homodimer. Probably interacts with PlsY.

It is found in the cytoplasm. The catalysed reaction is a fatty acyl-[ACP] + phosphate = an acyl phosphate + holo-[ACP]. Its pathway is lipid metabolism; phospholipid metabolism. Functionally, catalyzes the reversible formation of acyl-phosphate (acyl-PO(4)) from acyl-[acyl-carrier-protein] (acyl-ACP). This enzyme utilizes acyl-ACP as fatty acyl donor, but not acyl-CoA. This chain is Phosphate acyltransferase, found in Blochmanniella floridana.